The primary structure comprises 308 residues: MMQANLLPLVIHPEVKAALESRHAVVALESNVITHGLNYPANVETALAVEAAVRRSGAVPATIGICDGEILVGMHREQIERFATTPGIAKVSSNNLPFVLAQKSMGATTVASSLMLAELAGIGFFASAGIGGVHRGGEDSMDISSDLIQFTRTNVTVVCAGAKNILDIGRTLEFLETQCVPVVTYQTDDFPAFYCRSSGYRSPQRLDSLEAIAQAIDINRALPGSAAMVVAAPTKPEDAIDSRDVQAAIQAAIENAAAKGVTGSQVTKFIMKAVEQATHGRSAMANAAVLVNTAEIAGQLAMVYHRPR.

Residue Glu-29 is the Proton donor of the active site. Residues Lys-90 and Val-110 each contribute to the substrate site. Asp-142 contacts Mn(2+). A substrate-binding site is contributed by 144–146 (SSD). Lys-163 functions as the Nucleophile in the catalytic mechanism.

This sequence belongs to the pseudouridine-5'-phosphate glycosidase family. In terms of assembly, homotrimer. It depends on Mn(2+) as a cofactor.

The catalysed reaction is D-ribose 5-phosphate + uracil = psi-UMP + H2O. Catalyzes the reversible cleavage of pseudouridine 5'-phosphate (PsiMP) to ribose 5-phosphate and uracil. Functions biologically in the cleavage direction, as part of a pseudouridine degradation pathway. This is Pseudouridine-5'-phosphate glycosidase from Serratia proteamaculans (strain 568).